Reading from the N-terminus, the 294-residue chain is Zinc finger protein CONSTANS-LIKE 3 (294 aa).

The Zn(2+) site is built by Cys8, Cys11, Cys31, His36, Cys51, Cys54, Cys74, and His79. Residues 8-50 (CDSCKSTAATLFCRADAAFLCGDCDGKIHTANKLASRHERVWL) form a B box-type 1; atypical zinc finger. The segment at 51–93 (CEVCEQAPAHVTCKADAAALCVTCDRDIHSANPLSRRHERVPI) adopts a B box-type 2; atypical zinc-finger fold. The CCT domain occupies 229 to 271 (REARVLRYREKRKNRKFEKTIRYASRKAYAEMRPRIKGRFAKR).

The protein belongs to the CONSTANS family.

It is found in the nucleus. The polypeptide is Zinc finger protein CONSTANS-LIKE 3 (COL3) (Arabidopsis thaliana (Mouse-ear cress)).